The primary structure comprises 168 residues: Protein GrpE (168 aa).

It belongs to the GrpE family. Homodimer.

The protein localises to the cytoplasm. Its function is as follows. Participates actively in the response to hyperosmotic and heat shock by preventing the aggregation of stress-denatured proteins, in association with DnaK and GrpE. It is the nucleotide exchange factor for DnaK and may function as a thermosensor. Unfolded proteins bind initially to DnaJ; upon interaction with the DnaJ-bound protein, DnaK hydrolyzes its bound ATP, resulting in the formation of a stable complex. GrpE releases ADP from DnaK; ATP binding to DnaK triggers the release of the substrate protein, thus completing the reaction cycle. Several rounds of ATP-dependent interactions between DnaJ, DnaK and GrpE are required for fully efficient folding. This Thermotoga neapolitana (strain ATCC 49049 / DSM 4359 / NBRC 107923 / NS-E) protein is Protein GrpE.